A 190-amino-acid polypeptide reads, in one-letter code: Elongation factor P-like protein (190 aa).

The protein belongs to the elongation factor P family.

This Pectobacterium atrosepticum (strain SCRI 1043 / ATCC BAA-672) (Erwinia carotovora subsp. atroseptica) protein is Elongation factor P-like protein.